Here is a 288-residue protein sequence, read N- to C-terminus: MNFIGKILGFIIGYRFGGLFGGIAGLILGHIADKKLYELGSVNSSFFSKKITRQSLFMQTTFAVLGHLSKAKGRVTEEDIQLANNLMSQMQLDVANRQLAQNAFNRGKEADFPVREVIREFRIGCGQRADLLRMFLHIQVQAAFADSNLHNNEKELLFVIAEELGLSRFQFDQMLAMEMAARQFTQGGFYRQQQYQQQSHQQYNQENYQNSYRTSSGPTVEDAYKVLGVNAGDNQQTVKRAYRRLMNEHHPDKLVAKGLPKEMMEMAKEKAQQIQAAYDLICKVKGWK.

Over 1–6 the chain is Periplasmic; the sequence is MNFIGK. Residues 7–30 traverse the membrane as a helical segment; it reads ILGFIIGYRFGGLFGGIAGLILGH. The Cytoplasmic portion of the chain corresponds to 31 to 288; it reads IADKKLYELG…DLICKVKGWK (258 aa). The 67-residue stretch at 222-288 folds into the J domain; it reads DAYKVLGVNA…DLICKVKGWK (67 aa).

As to quaternary structure, homodimer.

It localises to the cell inner membrane. Regulatory DnaK co-chaperone. Direct interaction between DnaK and DjlA is needed for the induction of the wcaABCDE operon, involved in the synthesis of a colanic acid polysaccharide capsule, possibly through activation of the RcsB/RcsC phosphotransfer signaling pathway. The colanic acid capsule may help the bacterium survive conditions outside the host. The protein is Co-chaperone protein DjlA of Mannheimia succiniciproducens (strain KCTC 0769BP / MBEL55E).